Consider the following 440-residue polypeptide: MQAYFDQLDRVRYEGSKSSNPLAFRHYNPDELVLGKRMEEHLRFAACYWHTFCWNGADMFGVGAFNRPWQQPGEALALAKRKADVAFEFFHKLHVPFYCFHDVDVSPEGASLKEYINNFAQMVDVLAGKQEESGVKLLWGTANCFTNPRYGAGAATNPDPEVFSWAATQVVTAMEATHKLGGENYVLWGGREGYETLLNTDLRQEREQLGRFMQMVVEHKHKIGFQGTLLIEPKPQEPTKHQYDYDAATVYGFLKQFGLEKEIKLNIEANHATLAGHSFHHEIATAIALGLFGSVDANRGDAQLGWDTDQFPNSVEENALVMYEILKAGGFTTGGLNFDAKVRRQSTDKYDLFYGHIGAMDTMALALKIAARMIEDGELDKRIAQRYSGWNSELGQQILKGQMSLADLAKYAQEHHLSPVHQSGRQEQLENLVNHYLFDK.

2 residues coordinate Mg(2+): Asp307 and Asp309.

This sequence belongs to the xylose isomerase family. As to quaternary structure, homotetramer. It depends on Mg(2+) as a cofactor.

It is found in the cytoplasm. It catalyses the reaction alpha-D-xylose = alpha-D-xylulofuranose. This Escherichia coli (strain K12 / MC4100 / BW2952) protein is Xylose isomerase.